Consider the following 208-residue polypeptide: Adapter protein MecA (208 aa).

This sequence belongs to the MecA family. As to quaternary structure, homodimer.

Enables the recognition and targeting of unfolded and aggregated proteins to the ClpC protease or to other proteins involved in proteolysis. The polypeptide is Adapter protein MecA (Exiguobacterium sibiricum (strain DSM 17290 / CCUG 55495 / CIP 109462 / JCM 13490 / 255-15)).